Here is a 175-residue protein sequence, read N- to C-terminus: Lipopolysaccharide export system protein LptH (175 aa).

A signal peptide spans 1 to 24 (MRFVNTLPLIFGLTAALGSSMALA).

The protein belongs to the LptA family. Component of the lipopolysaccharide transport and assembly complex. Mainly exists as a dimer in solution. Tends to oligomerize already in solution. The protomers follow one another in a head-to-tail fashion throughout the crystal lattice, yielding a continuous fiber arrangement.

It is found in the periplasm. Involved in the assembly of lipopolysaccharide (LPS). Required for the translocation of LPS from the inner membrane to the outer membrane. May form a bridge between the inner membrane and the outer membrane, via interactions with LptC and LptD, thereby facilitating LPS transfer across the periplasm. Binds LPS. Important for cell envelope stability and essential for growth, cell viability and ability to cause infection in different animal models. This is Lipopolysaccharide export system protein LptH from Pseudomonas aeruginosa (strain ATCC 15692 / DSM 22644 / CIP 104116 / JCM 14847 / LMG 12228 / 1C / PRS 101 / PAO1).